The primary structure comprises 364 residues: tRNA-specific 2-thiouridylase MnmA 1 (364 aa).

Residues 11–18 and F37 contribute to the ATP site; that span reads GMSGGTDS. The active-site Nucleophile is C96. The cysteines at positions 96 and 193 are disulfide-linked. ATP is bound at residue G120. The tract at residues 142-144 is interaction with tRNA; the sequence is KDQ. The active-site Cysteine persulfide intermediate is C193. Residues 309 to 310 are interaction with tRNA; the sequence is RY.

It belongs to the MnmA/TRMU family.

The protein resides in the cytoplasm. It carries out the reaction S-sulfanyl-L-cysteinyl-[protein] + uridine(34) in tRNA + AH2 + ATP = 2-thiouridine(34) in tRNA + L-cysteinyl-[protein] + A + AMP + diphosphate + H(+). In terms of biological role, catalyzes the 2-thiolation of uridine at the wobble position (U34) of tRNA, leading to the formation of s(2)U34. The polypeptide is tRNA-specific 2-thiouridylase MnmA 1 (Bacteroides fragilis (strain ATCC 25285 / DSM 2151 / CCUG 4856 / JCM 11019 / LMG 10263 / NCTC 9343 / Onslow / VPI 2553 / EN-2)).